A 27-amino-acid polypeptide reads, in one-letter code: Omega-conotoxin RVIA (27 aa).

Disulfide bonds link cysteine 1–cysteine 16, cysteine 8–cysteine 19, and cysteine 15–cysteine 26. 2 positions are modified to 4-hydroxyproline: proline 4 and proline 7.

It belongs to the conotoxin O1 superfamily. As to expression, expressed by the venom duct.

Its subcellular location is the secreted. Functionally, omega-conotoxins act at presynaptic membranes, they bind and block voltage-gated calcium channels (Cav). In Conus radiatus (Rayed cone), this protein is Omega-conotoxin RVIA.